A 489-amino-acid polypeptide reads, in one-letter code: NF-kappa-B inhibitor cactus (489 aa).

Over residues 1–26 (MPSPTKAAEAATKATATSDCSCSAAS) the composition is skewed to low complexity. Disordered regions lie at residues 1-138 (MPSP…SMRL) and 163-203 (NNLG…APPS). S45 is subject to Phosphoserine; by PKC. The span at 69-86 (NETSDSGFISGPQSSQIC) shows a compositional bias: polar residues. A Phosphoserine; by PKC modification is found at S135. The segment covering 163 to 180 (NNLGQSSSTQITGRSKFQ) has biased composition (polar residues). Position 174 is a phosphothreonine; by PKC (T174). Positions 181–203 (SSTASTANANPSGXGATSSAPPS) are enriched in low complexity. ANK repeat units follow at residues 220 to 252 (DGDT…LLNI), 256 to 285 (VAQT…EVRD), 287 to 316 (HGNT…ATEI), 350 to 379 (DGER…DINA), and 384 to 413 (SGRT…KLNL). A Phosphothreonine; by PKC modification is found at T308. Residue S384 is modified to Phosphoserine; by PKC.

Its subcellular location is the cytoplasm. In terms of biological role, involved in the formation of the dorsoventral pattern. It inhibits nuclear translocation of the dorsal morphogen in the dorsal region of the embryo. This is NF-kappa-B inhibitor cactus (cact) from Drosophila yakuba (Fruit fly).